The sequence spans 199 residues: Securin (199 aa).

2 disordered regions span residues 1–23 (MATL…SKDG) and 58–108 (RKAL…DDAY). N-acetylalanine is present on A2. The span at 7–23 (VDKDNEEPGSRLASKDG) shows a compositional bias: basic and acidic residues. The short motif at 58 to 61 (RKAL) is the D-box element. Residues 68–70 (TEK) carry the TEK-box 1 motif. The segment covering 76–85 (KPLQSKQPTL) has biased composition (polar residues). A TEK-box 2 motif is present at residues 91–93 (TEK). The residue at position 162 (S162) is a Phosphoserine. The SH3-binding signature appears at 179–192 (PPSALSALDVELPP).

It belongs to the securin family. As to quaternary structure, interacts with the caspase-like ESPL1, and prevents its protease activity by covering its active site. Interacts with p53/TP53 and blocks its activity probably by blocking its binding to DNA. Interacts with the Ku 70 kDa subunit of ds-DNA kinase. Interacts with PTTG1IP. Interacts with RPS10 and DNAJA1. Phosphorylated at Ser-162 by CDK1 during mitosis. Post-translationally, phosphorylated in vitro by ds-DNA kinase. In terms of processing, ubiquitinated through 'Lys-11' linkage of ubiquitin moieties by the anaphase promoting complex (APC) at the onset of anaphase, conducting to its degradation. 'Lys-11'-linked ubiquitination is mediated by the E2 ligase UBE2C/UBCH10. Expressed at low level in most tissues, except in adult testis, where it is highly expressed. Expressed in both spermatocytes and spermatids.

The protein localises to the cytoplasm. It is found in the nucleus. Its function is as follows. Regulatory protein, which plays a central role in chromosome stability, in the p53/TP53 pathway, and DNA repair. Probably acts by blocking the action of key proteins. During the mitosis, it blocks Separase/ESPL1 function, preventing the proteolysis of the cohesin complex and the subsequent segregation of the chromosomes. At the onset of anaphase, it is ubiquitinated, conducting to its destruction and to the liberation of ESPL1. Its function is however not limited to a blocking activity, since it is required to activate ESPL1. Negatively regulates the transcriptional activity and related apoptosis activity of p53/TP53. The negative regulation of p53/TP53 may explain the strong transforming capability of the protein when it is overexpressed. May also play a role in DNA repair via its interaction with Ku, possibly by connecting DNA damage-response pathways with sister chromatid separation. The sequence is that of Securin (Pttg1) from Rattus norvegicus (Rat).